We begin with the raw amino-acid sequence, 472 residues long: Argininosuccinate lyase (472 aa).

This sequence belongs to the lyase 1 family. Argininosuccinate lyase subfamily.

The protein localises to the cytoplasm. It catalyses the reaction 2-(N(omega)-L-arginino)succinate = fumarate + L-arginine. The protein operates within amino-acid biosynthesis; L-arginine biosynthesis; L-arginine from L-ornithine and carbamoyl phosphate: step 3/3. The polypeptide is Argininosuccinate lyase (Polynucleobacter necessarius subsp. necessarius (strain STIR1)).